The chain runs to 578 residues: Raftlin (578 aa).

Gly-2 carries N-myristoyl glycine lipidation. Cys-3 is lipidated: S-palmitoyl cysteine. Residues 169–184 (VNSAGSSAPVSTANST) are compositionally biased toward polar residues. Disordered stretches follow at residues 169–271 (VNSA…VHEE), 449–525 (FSRE…PGGL), and 551–578 (CTGHSNPGEDARDGDAEEVRELGTVEEN). Phosphoserine occurs at positions 183, 199, and 220. Basic and acidic residues predominate over residues 185–206 (EDARDAKNARGDHASLENEKPG). Basic residues predominate over residues 457-466 (RQMRKSKGKL). Positions 467–485 (SARDKQQAEENEKNLEDQS) are enriched in basic and acidic residues. Position 505 is a phosphoserine (Ser-505). Composition is skewed to basic and acidic residues over residues 506-518 (EEMKGPVQEDKGE) and 557-578 (PGEDARDGDAEEVRELGTVEEN).

This sequence belongs to the raftlin family. In terms of assembly, interacts with TLR4; the interaction occurs in response to lipopolysaccharide stimulation. Interacts with CLTC; the interaction occurs in response to pathogens. Interacts with AP2A1 and AP2B1. As to expression, expressed in B-cells (at protein level). Expressed in dendritic cells and macrophages.

Its subcellular location is the cell membrane. The protein localises to the cytoplasm. The protein resides in the membrane raft. It is found in the endosome. It localises to the early endosome. In terms of biological role, involved in protein trafficking via association with clathrin and AP2 complex. Upon bacterial lipopolysaccharide stimulation, mediates internalization of TLR4 to endosomes in dendritic cells and macrophages; and internalization of poly(I:C) to TLR3-positive endosomes in myeloid dendritic cells and epithelial cells; resulting in activation of TICAM1-mediated signaling and subsequent IFNB1 production. Involved in T-cell antigen receptor-mediated signaling by regulating tyrosine kinase LCK localization, T-cell dependent antibody production and cytokine secretion. May regulate B-cell antigen receptor-mediated signaling. May play a pivotal role in the formation and/or maintenance of lipid rafts. In Homo sapiens (Human), this protein is Raftlin (RFTN1).